Here is a 311-residue protein sequence, read N- to C-terminus: Meteorin-like protein (311 aa).

Positions 1–45 (MRGVVWAARRRAGQQWPRSPGPGPGPPPPPPLLLLLLLLLGGASA) are cleaved as a signal peptide. Cysteine 52 and cysteine 75 are joined by a disulfide. The N-linked (GlcNAc...) asparagine glycan is linked to asparagine 103. Cystine bridges form between cysteine 107–cysteine 143, cysteine 188–cysteine 260, cysteine 191–cysteine 284, and cysteine 201–cysteine 306.

Belongs to the meteorin family. Abundantly expressed in adipose tissue.

It is found in the secreted. Hormone induced following exercise or cold exposure that promotes energy expenditure. Induced either in the skeletal muscle after exercise or in adipose tissue following cold exposure and is present in the circulation. Able to stimulate energy expenditure associated with the browning of the white fat depots and improves glucose tolerance. Does not promote an increase in a thermogenic gene program via direct action on adipocytes, but acts by stimulating several immune cell subtypes to enter the adipose tissue and activate their prothermogenic actions. Stimulates an eosinophil-dependent increase in IL4 expression and promotes alternative activation of adipose tissue macrophages, which are required for the increased expression of the thermogenic and anti-inflammatory gene programs in fat. Required for some cold-induced thermogenic responses, suggesting a role in metabolic adaptations to cold temperatures. This is Meteorin-like protein (Metrnl) from Rattus norvegicus (Rat).